The chain runs to 252 residues: Phosphate import ATP-binding protein PstB (252 aa).

In terms of domain architecture, ABC transporter spans 5-247 (MRGQDVKVFY…PKEQRTQDYI (243 aa)). 37 to 44 (GPSGCGKS) is a binding site for ATP.

Belongs to the ABC transporter superfamily. Phosphate importer (TC 3.A.1.7) family. As to quaternary structure, the complex is composed of two ATP-binding proteins (PstB), two transmembrane proteins (PstC and PstA) and a solute-binding protein (PstS).

It is found in the cell inner membrane. The catalysed reaction is phosphate(out) + ATP + H2O = ADP + 2 phosphate(in) + H(+). Functionally, part of the ABC transporter complex PstSACB involved in phosphate import. Responsible for energy coupling to the transport system. The polypeptide is Phosphate import ATP-binding protein PstB (Bartonella henselae (strain ATCC 49882 / DSM 28221 / CCUG 30454 / Houston 1) (Rochalimaea henselae)).